The following is an 852-amino-acid chain: Cytochrome P450 monooxygenase mpaDE (852 aa).

At 1 to 6 the chain is on the lumenal side; the sequence is MDYLII. A helical transmembrane segment spans residues 7–29; that stretch reads IRITAVAVVLYLTRYVCCLYLHL. At 30-852 the chain is on the cytoplasmic side; sequence QDVPGPLFAK…DLEDAMEGTK (823 aa). C448 contacts heme.

Belongs to the cytochrome P450 family. Heme is required as a cofactor.

The protein localises to the endoplasmic reticulum membrane. The catalysed reaction is 5-methylorsellinate + reduced [NADPH--hemoprotein reductase] + O2 = 4,6-dihydroxy-2-(hydroxymethyl)-3-methylbenzoate + oxidized [NADPH--hemoprotein reductase] + H2O + H(+). It carries out the reaction 4,6-dihydroxy-2-(hydroxymethyl)-3-methylbenzoate + H(+) = 5,7-dihydroxy-4-methylphthalide + H2O. It participates in secondary metabolite biosynthesis; terpenoid biosynthesis. Its function is as follows. Cytochrome P450 monooxygenase; part of the gene cluster that mediates the biosynthesis of mycophenolic acid (MPA), the first isolated antibiotic natural product in the world obtained from a culture of Penicillium brevicompactum in 1893. MpaDE is an endoplasmic reticulum-bound enzyme that catalyzes the conversion of 5-methylorsellinic acid (5MOA) into the phthalide compound 5,7-dihydroxy-4,6-dimethylphthalide (DHMP). MpaDE first catalyzes hydroxylation of 5-MOA to 4,6-dihydroxy-2-(hydroxymethyl)-3-methylbenzoic acid (DHMB), and then acts as a lactone synthase that catalyzes the ring closure to convert DHMB into DHMP. The first step of the pathway is the synthesis of 5-methylorsellinic acid (5MOA) by the cytosolic polyketide synthase mpaC. 5MOA is then converted to the phthalide compound 5,7-dihydroxy-4,6-dimethylphthalide (DHMP) by the endoplasmic reticulum-bound cytochrome P450 monooxygenase mpaDE. MpaDE first catalyzes hydroxylation of 5-MOA to 4,6-dihydroxy-2-(hydroxymethyl)-3-methylbenzoic acid (DHMB). MpaDE then acts as a lactone synthase that catalyzes the ring closure to convert DHMB into DHMP. The next step is the prenylation of DHMP by the Golgi apparatus-associated prenyltransferase mpaA to yield farnesyl-DHMP (FDHMP). The ER-bound oxygenase mpaB then mediates the oxidative cleavage the C19-C20 double bond in FDHMP to yield FDHMP-3C via a mycophenolic aldehyde intermediate. The O-methyltransferase mpaG catalyzes the methylation of FDHMP-3C to yield MFDHMP-3C. After the cytosolic methylation of FDHMP-3C, MFDHMP-3C enters into peroxisomes probably via free diffusion due to its low molecular weight. Upon a peroxisomal CoA ligation reaction, catalyzed by a beta-oxidation component enzyme acyl-CoA ligase ACL891, MFDHMP-3C-CoA would then be restricted to peroxisomes for the following beta-oxidation pathway steps. The peroxisomal beta-oxidation machinery than converts MFDHMP-3C-CoA into MPA_CoA, via a beta-oxidation chain-shortening process. Finally mpaH acts as a peroxisomal acyl-CoA hydrolase with high substrate specificity toward MPA-CoA to release the final product MPA. The polypeptide is Cytochrome P450 monooxygenase mpaDE (Penicillium roqueforti (strain FM164)).